The chain runs to 325 residues: GMP reductase (325 aa).

Residue Cys-173 is the Thioimidate intermediate of the active site. 202-225 is an NADP(+) binding site; that stretch reads IIADGGIRDHGDIAKSVRFGASMV.

This sequence belongs to the IMPDH/GMPR family. GuaC type 2 subfamily.

The enzyme catalyses IMP + NH4(+) + NADP(+) = GMP + NADPH + 2 H(+). Functionally, catalyzes the irreversible NADPH-dependent deamination of GMP to IMP. It functions in the conversion of nucleobase, nucleoside and nucleotide derivatives of G to A nucleotides, and in maintaining the intracellular balance of A and G nucleotides. This chain is GMP reductase, found in Variovorax paradoxus (strain S110).